Consider the following 349-residue polypeptide: ATPase GET3 (349 aa).

Position 26-33 (K26–T33) interacts with ATP. The active site involves D57. Residues E240 and N267 each contribute to the ATP site. The Zn(2+) site is built by C280 and C283.

The protein belongs to the arsA ATPase family. In terms of assembly, homodimer. Component of the Golgi to ER traffic (GET) complex, which is composed of GET1, GET2 and GET3. Within the complex, GET1 and GET2 form a heterotetramer which is stabilized by phosphatidylinositol binding and which binds to the GET3 homodimer. Interacts with the chloride channel protein GEF1.

The protein resides in the cytoplasm. The protein localises to the endoplasmic reticulum. It is found in the golgi apparatus. Functionally, ATPase required for the post-translational delivery of tail-anchored (TA) proteins to the endoplasmic reticulum. Recognizes and selectively binds the transmembrane domain of TA proteins in the cytosol. This complex then targets to the endoplasmic reticulum by membrane-bound receptors GET1 and GET2, where the tail-anchored protein is released for insertion. This process is regulated by ATP binding and hydrolysis. ATP binding drives the homodimer towards the closed dimer state, facilitating recognition of newly synthesized TA membrane proteins. ATP hydrolysis is required for insertion. Subsequently, the homodimer reverts towards the open dimer state, lowering its affinity for the GET1-GET2 receptor, and returning it to the cytosol to initiate a new round of targeting. Cooperates with the HDEL receptor ERD2 to mediate the ATP-dependent retrieval of resident ER proteins that contain a C-terminal H-D-E-L retention signal from the Golgi to the ER. Involved in low-level resistance to the oxyanions arsenite and arsenate, and in heat tolerance. The polypeptide is ATPase GET3 (Lachancea thermotolerans (strain ATCC 56472 / CBS 6340 / NRRL Y-8284) (Yeast)).